We begin with the raw amino-acid sequence, 507 residues long: Arabinose import ATP-binding protein AraG (507 aa).

ABC transporter domains lie at 14–249 (LRFN…MVGR) and 249–505 (RDIQ…LPRT). 46–53 (GENGAGKS) serves as a coordination point for ATP.

This sequence belongs to the ABC transporter superfamily. Arabinose importer (TC 3.A.1.2.2) family. In terms of assembly, the complex is composed of two ATP-binding proteins (AraG), two transmembrane proteins (AraH) and a solute-binding protein (AraF).

Its subcellular location is the cell inner membrane. It catalyses the reaction L-arabinose(out) + ATP + H2O = L-arabinose(in) + ADP + phosphate + H(+). Functionally, part of the ABC transporter complex AraFGH involved in arabinose import. Responsible for energy coupling to the transport system. This is Arabinose import ATP-binding protein AraG from Pseudomonas savastanoi pv. phaseolicola (strain 1448A / Race 6) (Pseudomonas syringae pv. phaseolicola (strain 1448A / Race 6)).